The following is a 417-amino-acid chain: Phosphoglycerate kinase (417 aa).

14 residues coordinate (2R)-3-phosphoglycerate: valine 23, aspartate 24, phenylalanine 25, asparagine 26, glutamine 39, arginine 40, serine 63, histidine 64, glycine 66, arginine 67, leucine 122, arginine 123, histidine 170, and arginine 171. An ADP-binding site is contributed by glycine 214. Residue glycine 214 coordinates CDP. AMP contacts are provided by alanine 215 and lysine 216. Residue alanine 215 coordinates ATP. Alanine 215 contacts Mg(2+). Residue aspartate 219 coordinates CDP. Aspartate 219 lines the Mg(2+) pocket. Lysine 220 lines the AMP pocket. Lysine 220 contributes to the ATP binding site. Glycine 238 is a binding site for ADP. Glycine 238 contributes to the CDP binding site. AMP is bound by residues alanine 239 and glycine 313. Residues alanine 239 and glycine 313 each contribute to the ATP site. CDP is bound by residues glycine 338 and phenylalanine 343. An ADP-binding site is contributed by phenylalanine 343. Position 344 (glutamate 344) interacts with AMP. Residues glutamate 344, aspartate 375, and threonine 376 each contribute to the ATP site. Aspartate 375 provides a ligand contact to Mg(2+).

It belongs to the phosphoglycerate kinase family. Monomer. Requires Mg(2+) as cofactor.

The protein localises to the cytoplasm. The protein resides in the mitochondrion. The catalysed reaction is (2R)-3-phosphoglycerate + ATP = (2R)-3-phospho-glyceroyl phosphate + ADP. Its pathway is carbohydrate degradation; glycolysis; pyruvate from D-glyceraldehyde 3-phosphate: step 2/5. Functionally, catalyzes one of the two ATP producing reactions in the glycolytic pathway via the reversible conversion of 1,3-diphosphoglycerate to 3-phosphoglycerate. Both L- and D- forms of purine and pyrimidine nucleotides can be used as substrates, but the activity is much lower on pyrimidines. Negatively regulates the biosynthesis of acetyl-CoA from pyruvate in the mitochondrion. This is Phosphoglycerate kinase (pgkA) from Aspergillus oryzae (strain ATCC 42149 / RIB 40) (Yellow koji mold).